The sequence spans 222 residues: Deoxyribose-phosphate aldolase (222 aa).

The Proton donor/acceptor role is filled by Asp91. The active-site Schiff-base intermediate with acetaldehyde is the Lys153. The Proton donor/acceptor role is filled by Lys182.

This sequence belongs to the DeoC/FbaB aldolase family. DeoC type 1 subfamily.

The protein localises to the cytoplasm. The catalysed reaction is 2-deoxy-D-ribose 5-phosphate = D-glyceraldehyde 3-phosphate + acetaldehyde. It participates in carbohydrate degradation; 2-deoxy-D-ribose 1-phosphate degradation; D-glyceraldehyde 3-phosphate and acetaldehyde from 2-deoxy-alpha-D-ribose 1-phosphate: step 2/2. Its function is as follows. Catalyzes a reversible aldol reaction between acetaldehyde and D-glyceraldehyde 3-phosphate to generate 2-deoxy-D-ribose 5-phosphate. The chain is Deoxyribose-phosphate aldolase from Mycoplasma capricolum subsp. capricolum (strain California kid / ATCC 27343 / NCTC 10154).